The sequence spans 321 residues: MAPGEGGYRQINKALNICAFEDYLEGQQKALPSLPDVEQISPRVLRVLGQNPASHCKFTLQGTNTFVVGTGPERLIVDTGQGIPEWADLIHETLARRGITLSHVLLTHWHGDHTGGVPDLIRMYPHLSSAIYKHEPSKTQQPITDGQIFRVEGATVRAVHTPGHSSDHMCFVLEEEHGMFTGDNILGHGTSAVEHLSTWMHTLYKMQAQDCTTGYPAHGIVISNLRTKIKGELAQKLQRERQVLKALVQAKQAERARMERAKGSVTVKELVATMYGNGVGAGIRELALEPFMDEVLRKLAEDGAVAFEVRGRVKKWFAPDA.

Positions 108, 110, 112, and 113 each coordinate Zn(2+). The Proton donor/acceptor role is filled by Asp112.

This sequence belongs to the metallo-beta-lactamase superfamily. Zn(2+) is required as a cofactor.

Lactamase-like protein; part of the gene cluster that mediates the biosynthesis of notoamide, a fungal indole alkaloid that belongs to a family of natural products containing a characteristic bicyclo[2.2.2]diazaoctane core. The first step of notoamide biosynthesis involves coupling of L-proline and L-tryptophan by the bimodular NRPS notE, to produce cyclo-L-tryptophan-L-proline called brevianamide F. The reverse prenyltransferase notF then acts as a deoxybrevianamide E synthase and converts brevianamide F to deoxybrevianamide E via reverse prenylation at C-2 of the indole ring leading to the bicyclo[2.2.2]diazaoctane core. Deoxybrevianamide E is further hydroxylated at C-6 of the indole ring, likely catalyzed by the cytochrome P450 monooxygenase notG, to yield 6-hydroxy-deoxybrevianamide E. 6-hydroxy-deoxybrevianamide E is a specific substrate of the prenyltransferase notC for normal prenylation at C-7 to produce 6-hydroxy-7-prenyl-deoxybrevianamide, also called notoamide S. As the proposed pivotal branching point in notoamide biosynthesis, notoamide S can be diverted to notoamide E through an oxidative pyran ring closure putatively catalyzed by either notH cytochrome P450 monooxygenase or the notD FAD-linked oxidoreductase. This step would be followed by an indole 2,3-epoxidation-initiated pinacol-like rearrangement catalyzed by the notB FAD-dependent monooxygenase leading to the formation of notoamide C and notoamide D. On the other hand notoamide S is converted to notoamide T by notH (or notD), a bifunctional oxidase that also functions as the intramolecular Diels-Alderase responsible for generation of (+)-notoamide T. To generate antipodal (-)-notoaminide T, notH' (or notD') in Aspergillus versicolor is expected to catalyze a Diels-Alder reaction leading to the opposite stereochemistry. The remaining oxidoreductase notD (or notH) likely catalyzes the oxidative pyran ring formation to yield (+)-stephacidin A. The FAD-dependent monooxygenase notI is highly similar to notB and is predicted to catalyze a similar conversion from (+)-stephacidin A to (-)-notoamide B via the 2,3-epoxidation of (+)-stephacidin A followed by a pinacol-type rearrangement. Finally, it remains unclear which enzyme could be responsible for the final hydroxylation steps leading to notoamide A and sclerotiamide. The function of notP in the notoamide biosynthesis has not been determined yet. The chain is Lactamase-like protein notP from Aspergillus sp. (strain MF297-2).